The primary structure comprises 139 residues: Transcription antitermination protein NusB (139 aa).

Belongs to the NusB family.

In terms of biological role, involved in transcription antitermination. Required for transcription of ribosomal RNA (rRNA) genes. Binds specifically to the boxA antiterminator sequence of the ribosomal RNA (rrn) operons. This chain is Transcription antitermination protein NusB, found in Limosilactobacillus fermentum (strain NBRC 3956 / LMG 18251) (Lactobacillus fermentum).